The primary structure comprises 397 residues: Lysophospholipid transporter LplT (397 aa).

The Periplasmic portion of the chain corresponds to 1-17 (MSESVHTNTSLWSKGMK). The helical transmembrane segment at 18–38 (AVIVAQFLSAFGDNALLFATL) threads the bilayer. Residues 39–52 (ALLKAQFYPEWSQP) are Cytoplasmic-facing. The helical transmembrane segment at 53–73 (ILQMVFVGAYILFAPFVGQVA) threads the bilayer. Residues 74–90 (DSFAKGRVMMFANGLKL) are Periplasmic-facing. Residues 91–111 (LGAASICFGINPFLGYTLVGV) traverse the membrane as a helical segment. The Cytoplasmic segment spans residues 112-144 (GAAAYSPAKYGILGELTTGSKLVKANGLMEAST). The chain crosses the membrane as a helical span at residues 145-165 (IAAILLGSVAGGVLADWHVLV). A topological domain (periplasmic) is located at residue Ala-166. The chain crosses the membrane as a helical span at residues 167-187 (LAACALAYGGAVVANIYIPKL). The Cytoplasmic segment spans residues 188-226 (AAARPGQSWNLINMTRSFLNACTSLWRNGETRFSLVGTS). The helical transmembrane segment at 227-247 (LFWGAGVTLRFLLVLWVPVAL) threads the bilayer. The Periplasmic segment spans residues 248–256 (GITDNSTPT). The helical transmembrane segment at 257-277 (YLNAMVAIGIVVGAGAAAKLV) threads the bilayer. Topologically, residues 278–280 (TLE) are cytoplasmic. The helical transmembrane segment at 281-301 (TVSRCMPAGILIGVVVLIFSL) threads the bilayer. Topologically, residues 302–304 (QHE) are periplasmic. A helical membrane pass occupies residues 305 to 325 (LLPAYALLMLIGVMGGFFVVP). Residues 326-343 (LNALLQERGKKSVGAGNA) lie on the Cytoplasmic side of the membrane. The chain crosses the membrane as a helical span at residues 344 to 364 (IAVQNLGENSAMLLMLGIYSL). The Periplasmic segment spans residues 365 to 366 (AV). The helical transmembrane segment at 367–387 (MVGIPVVPIGIGFGALFALAI) threads the bilayer. Over 388–397 (TALWIWQRRH) the chain is Cytoplasmic.

This sequence belongs to the major facilitator superfamily. LplT (TC 2.A.1.42) family.

It localises to the cell inner membrane. Its function is as follows. Catalyzes the facilitated diffusion of 2-acyl-glycero-3-phosphoethanolamine (2-acyl-GPE) into the cell. This Shigella boydii serotype 4 (strain Sb227) protein is Lysophospholipid transporter LplT.